A 121-amino-acid polypeptide reads, in one-letter code: Glycine cleavage system H protein (121 aa).

Residues 16–98 (VATVGITAYA…ESGGWFAKIK (83 aa)) form the Lipoyl-binding domain. N6-lipoyllysine is present on Lys57.

Belongs to the GcvH family. As to quaternary structure, the glycine cleavage system is composed of four proteins: P, T, L and H. The cofactor is (R)-lipoate.

The glycine cleavage system catalyzes the degradation of glycine. The H protein shuttles the methylamine group of glycine from the P protein to the T protein. The chain is Glycine cleavage system H protein from Caulobacter vibrioides (strain NA1000 / CB15N) (Caulobacter crescentus).